We begin with the raw amino-acid sequence, 688 residues long: PTS system glucoside-specific EIICBA component (688 aa).

Residues 3 to 427 (KKLFGQLQRI…FKLKTPGRED (425 aa)) enclose the PTS EIIC type-1 domain. 10 helical membrane passes run 12 to 32 (IGKA…LLAF), 81 to 101 (LGLA…YLIM), 137 to 157 (LVLG…MGAL), 182 to 202 (FVPI…SFAW), 223 to 243 (LTTF…LHHI), 284 to 304 (AFTT…AFAI), 315 to 335 (VVGG…ITEP), 340 to 360 (FLFV…TSFL), 364 to 384 (LLGV…ILYG), and 395 to 415 (LVIP…DFAI). One can recognise a PTS EIIB type-1 domain in the interval 438-519 (AKLPFDVLDA…AKIMSGEITK (82 aa)). Cys-460 (phosphocysteine intermediate; for EIIB activity) is an active-site residue. The region spanning 560 to 664 (DQVFAGKMMG…SIVTPMIITN (105 aa)) is the PTS EIIA type-1 domain. His-612 serves as the catalytic Tele-phosphohistidine intermediate; for EIIA activity.

Its subcellular location is the cell membrane. Functionally, the phosphoenolpyruvate-dependent sugar phosphotransferase system (sugar PTS), a major carbohydrate active -transport system, catalyzes the phosphorylation of incoming sugar substrates concomitantly with their translocation across the cell membrane. This system is involved in alpha- and beta-glucoside transport. This Staphylococcus aureus (strain USA300) protein is PTS system glucoside-specific EIICBA component (glcB).